We begin with the raw amino-acid sequence, 57 residues long: UPF0391 membrane protein RPB_2024 (57 aa).

2 helical membrane passes run 4–24 (WVVT…GGIA) and 30–50 (IAKV…VVGL).

The protein belongs to the UPF0391 family.

It is found in the cell membrane. This is UPF0391 membrane protein RPB_2024 from Rhodopseudomonas palustris (strain HaA2).